We begin with the raw amino-acid sequence, 315 residues long: Glutamyl-Q tRNA(Asp) synthetase (315 aa).

L-glutamate is bound by residues 21–25 and glutamate 63; that span reads RFAPS. Residues 24–34 carry the 'HIGH' region motif; that stretch reads PSPSGLLHFGS. Zn(2+) is bound by residues cysteine 119, cysteine 121, tyrosine 133, and cysteine 137. 2 residues coordinate L-glutamate: tyrosine 190 and arginine 208. A 'KMSKS' region motif is present at residues 251 to 255; that stretch reads KLSKQ. Lysine 254 provides a ligand contact to ATP.

The protein belongs to the class-I aminoacyl-tRNA synthetase family. GluQ subfamily. The cofactor is Zn(2+).

In terms of biological role, catalyzes the tRNA-independent activation of glutamate in presence of ATP and the subsequent transfer of glutamate onto a tRNA(Asp). Glutamate is transferred on the 2-amino-5-(4,5-dihydroxy-2-cyclopenten-1-yl) moiety of the queuosine in the wobble position of the QUC anticodon. This chain is Glutamyl-Q tRNA(Asp) synthetase, found in Colwellia psychrerythraea (strain 34H / ATCC BAA-681) (Vibrio psychroerythus).